The chain runs to 857 residues: Protein ARG5,6, mitochondrial (857 aa).

The N-acetyltransferase domain occupies 341–492; it reads INRNSLRDFG…FDSSSIGSSL (152 aa). The tract at residues 509-532 is disordered; the sequence is GFHHSTVRRNTNPNPPLSEGKQTE. Cys-669 is an active-site residue.

The protein in the N-terminal section; belongs to the acetylglutamate kinase family. It in the C-terminal section; belongs to the NAGSA dehydrogenase family.

The protein localises to the mitochondrion. The catalysed reaction is N-acetyl-L-glutamate 5-semialdehyde + phosphate + NADP(+) = N-acetyl-L-glutamyl 5-phosphate + NADPH + H(+). It carries out the reaction N-acetyl-L-glutamate + ATP = N-acetyl-L-glutamyl 5-phosphate + ADP. The protein operates within amino-acid biosynthesis; L-arginine biosynthesis; N(2)-acetyl-L-ornithine from L-glutamate: step 2/4. Its pathway is amino-acid biosynthesis; L-arginine biosynthesis; N(2)-acetyl-L-ornithine from L-glutamate: step 3/4. In Candida albicans (Yeast), this protein is Protein ARG5,6, mitochondrial (ARG5,6).